Reading from the N-terminus, the 588-residue chain is Proteasome-associated ATPase (588 aa).

Positions 1–10 (MAAHDDDMNR) are enriched in basic and acidic residues. A disordered region spans residues 1–23 (MAAHDDDMNRGIRPGRGSDDPSG). Positions 47–94 (RILEERIVELQTNLAGVSAQNERLANTLREARDQIVALKEEVDRLAQP) form a coiled coil. 276-281 (GCGKTL) lines the ATP pocket. The docks into pockets in the proteasome alpha-ring stretch occupies residues 587-588 (YL).

Belongs to the AAA ATPase family. In terms of assembly, homohexamer. Assembles into a hexameric ring structure that caps the 20S proteasome core. Strongly interacts with the prokaryotic ubiquitin-like protein Pup through a hydrophobic interface; the interacting region of ARC lies in its N-terminal coiled-coil domain. There is one Pup binding site per ARC hexamer ring. Upon ATP-binding, the C-terminus of ARC interacts with the alpha-rings of the proteasome core, possibly by binding to the intersubunit pockets.

It functions in the pathway protein degradation; proteasomal Pup-dependent pathway. Functionally, ATPase which is responsible for recognizing, binding, unfolding and translocation of pupylated proteins into the bacterial 20S proteasome core particle. May be essential for opening the gate of the 20S proteasome via an interaction with its C-terminus, thereby allowing substrate entry and access to the site of proteolysis. Thus, the C-termini of the proteasomal ATPase may function like a 'key in a lock' to induce gate opening and therefore regulate proteolysis. The chain is Proteasome-associated ATPase from Streptomyces scabiei (strain 87.22).